A 550-amino-acid chain; its full sequence is Glucose-6-phosphate isomerase (550 aa).

Residue E356 is the Proton donor of the active site. Residues H387 and K515 contribute to the active site.

The protein belongs to the GPI family.

It localises to the cytoplasm. The enzyme catalyses alpha-D-glucose 6-phosphate = beta-D-fructose 6-phosphate. It participates in carbohydrate biosynthesis; gluconeogenesis. It functions in the pathway carbohydrate degradation; glycolysis; D-glyceraldehyde 3-phosphate and glycerone phosphate from D-glucose: step 2/4. In terms of biological role, catalyzes the reversible isomerization of glucose-6-phosphate to fructose-6-phosphate. This Photobacterium profundum (strain SS9) protein is Glucose-6-phosphate isomerase.